A 443-amino-acid polypeptide reads, in one-letter code: Ribulose bisphosphate carboxylase large chain (443 aa).

Lys7 bears the N6,N6,N6-trimethyllysine mark. Asn116 and Thr166 together coordinate substrate. Lys168 functions as the Proton acceptor in the catalytic mechanism. Substrate is bound at residue Lys170. Mg(2+) is bound by residues Lys194, Asp196, and Glu197. Lys194 is modified (N6-carboxylysine). His287 acts as the Proton acceptor in catalysis. Substrate is bound by residues Arg288, His320, and Ser372.

Belongs to the RuBisCO large chain family. Type I subfamily. In terms of assembly, heterohexadecamer of 8 large chains and 8 small chains; disulfide-linked. The disulfide link is formed within the large subunit homodimers. Mg(2+) serves as cofactor. The disulfide bond which can form in the large chain dimeric partners within the hexadecamer appears to be associated with oxidative stress and protein turnover.

Its subcellular location is the plastid. The protein localises to the chloroplast. The enzyme catalyses 2 (2R)-3-phosphoglycerate + 2 H(+) = D-ribulose 1,5-bisphosphate + CO2 + H2O. It catalyses the reaction D-ribulose 1,5-bisphosphate + O2 = 2-phosphoglycolate + (2R)-3-phosphoglycerate + 2 H(+). Its function is as follows. RuBisCO catalyzes two reactions: the carboxylation of D-ribulose 1,5-bisphosphate, the primary event in carbon dioxide fixation, as well as the oxidative fragmentation of the pentose substrate in the photorespiration process. Both reactions occur simultaneously and in competition at the same active site. In Abies homolepis (Nikko fir), this protein is Ribulose bisphosphate carboxylase large chain.